A 71-amino-acid chain; its full sequence is Protein SlyX homolog (71 aa).

This sequence belongs to the SlyX family.

The protein is Protein SlyX homolog of Rhodopseudomonas palustris (strain HaA2).